Here is a 567-residue protein sequence, read N- to C-terminus: DNA ligase B (567 aa).

The active-site N6-AMP-lysine intermediate is the lysine 132.

Belongs to the NAD-dependent DNA ligase family. LigB subfamily.

It catalyses the reaction NAD(+) + (deoxyribonucleotide)n-3'-hydroxyl + 5'-phospho-(deoxyribonucleotide)m = (deoxyribonucleotide)n+m + AMP + beta-nicotinamide D-nucleotide.. Catalyzes the formation of phosphodiester linkages between 5'-phosphoryl and 3'-hydroxyl groups in double-stranded DNA using NAD as a coenzyme and as the energy source for the reaction. In Yersinia pseudotuberculosis serotype IB (strain PB1/+), this protein is DNA ligase B.